The following is a 254-amino-acid chain: Alcohol dehydrogenase (254 aa).

10-33 contributes to the NAD(+) binding site; sequence FVAGLGGIGLDTSREIVKSGPKNL. Ser138 contacts substrate. Tyr151 serves as the catalytic Proton acceptor.

This sequence belongs to the short-chain dehydrogenases/reductases (SDR) family. Homodimer.

The catalysed reaction is a primary alcohol + NAD(+) = an aldehyde + NADH + H(+). It carries out the reaction a secondary alcohol + NAD(+) = a ketone + NADH + H(+). The sequence is that of Alcohol dehydrogenase (Adh) from Drosophila mimica (Fruit fly).